A 105-amino-acid polypeptide reads, in one-letter code: Guanyl-specific ribonuclease Ms (105 aa).

2 cysteine pairs are disulfide-bonded: cysteine 3–cysteine 11 and cysteine 7–cysteine 102. Histidine 39 is an active-site residue. Catalysis depends on glutamate 57, which acts as the Proton acceptor. Histidine 91 acts as the Proton donor in catalysis.

The protein belongs to the ribonuclease N1/T1 family.

The enzyme catalyses [RNA] containing guanosine + H2O = an [RNA fragment]-3'-guanosine-3'-phosphate + a 5'-hydroxy-ribonucleotide-3'-[RNA fragment].. This chain is Guanyl-specific ribonuclease Ms, found in Aspergillus phoenicis (Aspergillus saitoi).